We begin with the raw amino-acid sequence, 359 residues long: Heat-inducible transcription repressor HrcA (359 aa).

Belongs to the HrcA family.

In terms of biological role, negative regulator of class I heat shock genes (grpE-dnaK-dnaJ and groELS operons). Prevents heat-shock induction of these operons. The sequence is that of Heat-inducible transcription repressor HrcA from Sinorhizobium fredii (strain NBRC 101917 / NGR234).